Here is a 526-residue protein sequence, read N- to C-terminus: ATP synthase subunit alpha (526 aa).

171 to 178 is an ATP binding site; it reads GDRQTGKT.

The protein belongs to the ATPase alpha/beta chains family. As to quaternary structure, F-type ATPases have 2 components, CF(1) - the catalytic core - and CF(0) - the membrane proton channel. CF(1) has five subunits: alpha(3), beta(3), gamma(1), delta(1), epsilon(1). CF(0) has four main subunits: a(1), b(1), b'(1) and c(9-12).

The protein resides in the cell inner membrane. The catalysed reaction is ATP + H2O + 4 H(+)(in) = ADP + phosphate + 5 H(+)(out). Produces ATP from ADP in the presence of a proton gradient across the membrane. The alpha chain is a regulatory subunit. The polypeptide is ATP synthase subunit alpha (Chlorobium chlorochromatii (strain CaD3)).